Here is a 420-residue protein sequence, read N- to C-terminus: Ribulose bisphosphate carboxylase (420 aa).

Catalysis depends on lysine 155, which acts as the Proton acceptor. Residue lysine 157 coordinates substrate. Residues lysine 181, aspartate 183, and glutamate 184 each contribute to the Mg(2+) site. Residue lysine 181 is modified to N6-carboxylysine. Histidine 273 acts as the Proton acceptor in catalysis. Substrate contacts are provided by residues arginine 274, histidine 306, 343 to 345, and 365 to 368; these read SGG and QAGG.

It belongs to the RuBisCO large chain family. Type III subfamily. Homodimer or homodecamer. In contrast to form I RuBisCO, the form III RuBisCO is composed solely of large subunits. The cofactor is Mg(2+).

The enzyme catalyses 2 (2R)-3-phosphoglycerate + 2 H(+) = D-ribulose 1,5-bisphosphate + CO2 + H2O. It catalyses the reaction D-ribulose 1,5-bisphosphate + O2 = 2-phosphoglycolate + (2R)-3-phosphoglycerate + 2 H(+). Its function is as follows. Catalyzes the addition of molecular CO(2) and H(2)O to ribulose 1,5-bisphosphate (RuBP), generating two molecules of 3-phosphoglycerate (3-PGA). Functions in an archaeal AMP degradation pathway, together with AMP phosphorylase and R15P isomerase. This is Ribulose bisphosphate carboxylase from Pyrococcus furiosus (strain ATCC 43587 / DSM 3638 / JCM 8422 / Vc1).